Reading from the N-terminus, the 424-residue chain is Histone-binding protein RBBP7 (424 aa).

WD repeat units lie at residues 47 to 121, 127 to 172, 180 to 216, 227 to 268, 274 to 311, 317 to 368, and 375 to 402; these read QWLP…KINH, RARY…LRLR, GLSW…KIVD, VVED…HSVD, VNCL…LHSF, EIFQ…LFIH, and ISDF…IWQM. The segment at 359 to 404 is interaction with HAT1; it reads DGPPELLFIHGGHTAKISDFSWNPNEPWVICSVSEDNIMQIWQMAE.

This sequence belongs to the WD repeat RBAP46/RBAP48/MSI1 family. In terms of assembly, binds directly to helix 1 of the histone fold of histone H4, a region that is not accessible when H4 is in chromatin. Also interacts with histone H2B and HAT1.

It localises to the nucleus. Its function is as follows. Core histone-binding subunit that may target chromatin remodeling factors, histone acetyltransferases and histone deacetylases to their histone substrates in a manner that is regulated by nucleosomal DNA. Component of several complexes which regulate chromatin metabolism. The sequence is that of Histone-binding protein RBBP7 (RBBP7) from Gallus gallus (Chicken).